Consider the following 968-residue polypeptide: MPFTLGQRWISDTESELGLGTVVAMDARTVTLLFPATGENRLYARSDSPVTRVMFNPGDTITSHEGWQLQIDEVKEENGLLAYTGTRLDTEETAVTLREVLLDSKLVFSKPQDRLFAGQIDRMDRFALRYRARKFQSEQYRMPWSGLRGQRTSLIPHQLNIAHDVGRRHAPRVLLADEVGLGKTIEAGMILHQQLLSGAAERVLIIVPETLQHQWLVEMLRRFNLRFALFDDERYTEAQHDAYNPFETEQLVICSLDFARRNKQRLEHLCDAQWDLLVVDEAHHLVWSEDAPSREYMAIEQLAERVPGVLLLTATPEQLGMESHFARLRLLDPSRFHDFEQFVEEQKNYRPVADAVAMLLAGNKLSNEELNMLGDLIGEQDIEPLLQTANSDRDGAQNARQELVSMLMDRHGTSRVLFRNTRNGVKGFPKRELHTIKLPLPTQYQTAIKVSGIMGARKSAEDRARDMLYPEQIYQEFEGDSGTWWNFDPRVEWLMGHLTSHRSQKVLVICAKAATALQLEQVLREREGIRAAVFHEGMSIIERDRAAAWFSEEDSGAQVLLCSEIGSEGRNFQFASNLVMFDLPFNPDLLEQRIGRLDRIGQAHDIQIHVPYLEKTAQSVLVRWYHEGLDAFEHTCPTGRAIYDTVYHDLIAYLATPENTDGFDALIKTCREQHEALKAQLEQGRDRLLEIHSNGGEKAQALAESIEEQDDDTSLIAFAMNLFDIVGINQDDRGENLIVLTPSDHMLVPDFPGLPEDGCTITFERDVALSREDAQFVTWEHPLIRNGLDLILSGDTGSSTISLLKNKALPVGTLLVELVYVVEAQAPKHLQLNRFLPPTPVRMLLDKNGNNLAAQVEFETFNRQLSAVNRHTGSKLVNAVQQDVHAILQLGEAQAEKSARALIDAARSEADEKLSAELSRLEALRAVNPNIRDDELAAIDSNRQQVMESLDQANWRLDALRLIVVTHQ.

Residues 164–334 enclose the Helicase ATP-binding domain; sequence DVGRRHAPRV…FARLRLLDPS (171 aa). 177-184 contributes to the ATP binding site; it reads DEVGLGKT. The DEAH box motif lies at 280–283; the sequence is DEAH. The region spanning 490 to 644 is the Helicase C-terminal domain; that stretch reads RVEWLMGHLT…TCPTGRAIYD (155 aa).

It belongs to the SNF2/RAD54 helicase family. RapA subfamily. In terms of assembly, interacts with the RNAP. Has a higher affinity for the core RNAP than for the holoenzyme. Its ATPase activity is stimulated by binding to RNAP.

Transcription regulator that activates transcription by stimulating RNA polymerase (RNAP) recycling in case of stress conditions such as supercoiled DNA or high salt concentrations. Probably acts by releasing the RNAP, when it is trapped or immobilized on tightly supercoiled DNA. Does not activate transcription on linear DNA. Probably not involved in DNA repair. The sequence is that of RNA polymerase-associated protein RapA from Citrobacter koseri (strain ATCC BAA-895 / CDC 4225-83 / SGSC4696).